The chain runs to 171 residues: Lipoprotein signal peptidase (171 aa).

3 consecutive transmembrane segments (helical) span residues 8 to 28 (SFLW…YIVV), 64 to 84 (WQQY…VYFL), and 96 to 118 (SAYA…NGFV). Active-site residues include Asp120 and Asp138. A helical membrane pass occupies residues 133-153 (VFNIADIAICIGAGLLALDAF).

Belongs to the peptidase A8 family.

The protein localises to the cell inner membrane. The enzyme catalyses Release of signal peptides from bacterial membrane prolipoproteins. Hydrolyzes -Xaa-Yaa-Zaa-|-(S,diacylglyceryl)Cys-, in which Xaa is hydrophobic (preferably Leu), and Yaa (Ala or Ser) and Zaa (Gly or Ala) have small, neutral side chains.. Its pathway is protein modification; lipoprotein biosynthesis (signal peptide cleavage). Functionally, this protein specifically catalyzes the removal of signal peptides from prolipoproteins. The protein is Lipoprotein signal peptidase of Haemophilus influenzae (strain 86-028NP).